The sequence spans 248 residues: MKSYIEPFIASKALSQNSQKAYRYDLQQFCQLIGERVNQDKLLLYQNSIANLSLSAKKRKLSTANQFLYYLYQIKYLNSYFRLTDTMKVMRTEKQQAAIINTDIFYQKTPFVWGQLISLLILELGLTPSEVAGIEVANLDLNFQMLTLKTKKGVRVLPLSQILIPFLEQQLVGKEAYLFEHRGIPFSRQWFFNHLKTFVRSIGYEGLTAQKLREQFILKEKLAGKSIIELSDILGLKSPVTLEKYYKS.

The Core-binding (CB) domain maps to 1 to 72 (MKSYIEPFIA…TANQFLYYLY (72 aa)). Positions 85-248 (DTMKVMRTEK…PVTLEKYYKS (164 aa)) constitute a Tyr recombinase domain. Active-site residues include lysine 149 and arginine 213. The O-(3'-phospho-DNA)-tyrosine intermediate role is filled by tyrosine 245.

It belongs to the 'phage' integrase family. XerD-like subfamily.

The protein resides in the cytoplasm. Putative tyrosine recombinase. Not involved in the cutting and rejoining of the recombining DNA molecules on dif(SL) site. This chain is Tyrosine recombinase XerD-like, found in Streptococcus pyogenes serotype M28 (strain MGAS6180).